We begin with the raw amino-acid sequence, 1025 residues long: Myosin phosphatase Rho-interacting protein (1025 aa).

Positions 2–383 are interaction with F-actin; the sequence is SAAKENPCRK…DRRSTEPSVT (382 aa). One can recognise a PH 1 domain in the interval 43 to 150; that stretch reads KPIYGGWLLL…WLEMLMVYPR (108 aa). Disordered stretches follow at residues 152 to 302 and 317 to 383; these read NKQN…RRSQ and HMET…PSVT. The span at 179–189 shows a compositional bias: low complexity; sequence SSSSSSSSSSS. Ser-192, Ser-217, Ser-218, Ser-220, Ser-224, and Ser-226 each carry phosphoserine. Low complexity predominate over residues 217–236; the sequence is SSLSPAQSPSQSQPPAASSL. Over residues 239–263 the composition is skewed to basic and acidic residues; it reads PGLESKEEESAMSSDRMDCGRKVRV. Phosphoserine is present on residues Ser-265 and Ser-269. Residues 271 to 281 show a composition bias toward basic and acidic residues; it reads EKTKQDLKAEE. The span at 284 to 294 shows a compositional bias: pro residues; the sequence is LPPPLSPPSPS. Phosphoserine occurs at positions 289 and 292. Thr-295 is modified (phosphothreonine). Ser-326 bears the Phosphoserine mark. Basic and acidic residues predominate over residues 332-348; it reads RQGRSEKRAFPRKRDFT. Thr-348 carries the phosphothreonine modification. Phosphoserine occurs at positions 362 and 365. The region spanning 387–483 is the PH 2 domain; it reads LNFKKGWLTK…WIQTIMKHVH (97 aa). Disordered stretches follow at residues 485–545 and 560–591; these read TTAP…TFDW and VGGV…RREE. At Ser-493 the chain carries Phosphoserine. Composition is skewed to basic and acidic residues over residues 524-545 and 567-589; these read PEQK…TFDW and DTHE…ARRR. Positions 546-824 are interaction with RHOA; it reads AEFRPIQQAL…SVQRELEVLS (279 aa). A Phosphoserine modification is found at Ser-619. A Phosphothreonine modification is found at Thr-646. 2 positions are modified to phosphoserine: Ser-663 and Ser-800. A coiled-coil region spans residues 673–977; that stretch reads HELTSLLEKE…AATEALGEKS (305 aa). Positions 824 to 879 are interaction with PPP1R12A; sequence SEQYSQKCLENAHLAQALEAERQALRQCQRENQELNAHNQELNNRLAAEITRLRTL. Phosphoserine is present on residues Ser-891, Ser-977, Ser-993, Ser-1014, and Ser-1016.

In terms of assembly, binds F-actin through its N-terminus. Interacts with MYZAP. Binds RHOA, PPP1R12A/MBS and PPP1R12C/MBS85 through adjacent coiled coil domains.

Its subcellular location is the cytoplasm. It is found in the cytoskeleton. Targets myosin phosphatase to the actin cytoskeleton. Required for the regulation of the actin cytoskeleton by RhoA and ROCK1. Depletion leads to an increased number of stress fibers in smooth muscle cells through stabilization of actin fibers by phosphorylated myosin. Overexpression of MRIP as well as its F-actin-binding region leads to disassembly of stress fibers in neuronal cells. The chain is Myosin phosphatase Rho-interacting protein (MPRIP) from Homo sapiens (Human).